Here is an 88-residue protein sequence, read N- to C-terminus: Small ribosomal subunit protein bS21 (88 aa).

The tract at residues 58-88 (ARKRAQREGLLPMTPRPVAAGGAAGAARPPR) is disordered. The segment covering 73–88 (RPVAAGGAAGAARPPR) has biased composition (low complexity).

The protein belongs to the bacterial ribosomal protein bS21 family.

The chain is Small ribosomal subunit protein bS21 from Mesorhizobium japonicum (strain LMG 29417 / CECT 9101 / MAFF 303099) (Mesorhizobium loti (strain MAFF 303099)).